The chain runs to 151 residues: Natriuretic peptides A (151 aa).

Residues 1-25 form the signal peptide; that stretch reads MSSFSTTTVSFLLLLAFQLLGQTRA. Positions 62 to 105 are disordered; the sequence is VLSEPNEEAGAALSPLPEVPPWTGEVSPAQRDGGALGRGPWDSS. Residues 93–103 constitute a propeptide that is removed on maturation; sequence DGGALGRGPWD. Position 129 is a phosphoserine (Ser129). Cys130 and Cys146 are disulfide-bonded. The interval 147 to 151 is important for degradation of atrial natriuretic peptide by IDE; sequence NSFRY.

This sequence belongs to the natriuretic peptide family. In terms of assembly, homodimer; disulfide-linked antiparallel dimer. The precursor molecule is proteolytically cleaved by CORIN at Arg-123 to produce atrial natriuretic peptide. Undergoes further proteolytic cleavage by unknown proteases to give rise to long-acting natriuretic peptide, vessel dilator and kaliuretic peptide. Additional processing gives rise to the auriculin and atriopeptin peptides. In the kidneys, alternative processing by an unknown protease results in the peptide urodilatin. Post-translationally, cleavage by MME initiates degradation of the factor and thereby regulates its activity. Degraded by IDE (in vitro). During IDE degradation, the resulting products can temporarily stimulate NPR2 to produce cGMP, before the fragments are completely degraded and inactivated by IDE (in vitro). In terms of processing, degraded by IDE. Phosphorylation on Ser-129 decreases vasorelaxant activity. Detected in the kidney distal tubular cells (at protein level). Present in urine (at protein level). In terms of tissue distribution, detected in atrial and ventricular plasma samples, and in adipocytes (at protein level). Detected in urine in one study. However, was not detected in urine in another study. In the brain, predominantly expressed in the gray matter with very weak expression in the white matter (at protein level). Localizes to astrocyte-like structures throughout the white matter, and in the cerebral vessels detected in the leptomeningeal and parenchymal vessels, and endothelium and smooth muscle layers (at protein level). Relatively low levels of expression in the kidneys compared to urodilatin (at protein level).

The protein resides in the secreted. The protein localises to the perikaryon. It is found in the cell projection. Its function is as follows. Hormone that plays a key role in mediating cardio-renal homeostasis, and is involved in vascular remodeling and regulating energy metabolism. Acts by specifically binding and stimulating NPR1 to produce cGMP, which in turn activates effector proteins, such as PRKG1, that drive various biological responses. Regulates vasodilation, natriuresis, diuresis and aldosterone synthesis and is therefore essential for regulating blood pressure, controlling the extracellular fluid volume and maintaining the fluid-electrolyte balance. Also involved in inhibiting cardiac remodeling and cardiac hypertrophy by inducing cardiomyocyte apoptosis and attenuating the growth of cardiomyocytes and fibroblasts. Plays a role in female pregnancy by promoting trophoblast invasion and spiral artery remodeling in uterus, and thus prevents pregnancy-induced hypertension. In adipose tissue, acts in various cGMP- and PKG-dependent pathways to regulate lipid metabolism and energy homeostasis. This includes up-regulating lipid metabolism and mitochondrial oxygen utilization by activating the AMP-activated protein kinase (AMPK), and increasing energy expenditure by acting via MAPK11 to promote the UCP1-dependent thermogenesis of brown adipose tissue. Binds the clearance receptor NPR3 which removes the hormone from circulation. In terms of biological role, may have a role in cardio-renal homeostasis through regulation of natriuresis, diuresis, vasodilation, and inhibiting aldosterone synthesis. In vitro, promotes the production of cGMP and induces vasodilation. May promote natriuresis, at least in part, by enhancing prostaglandin E2 synthesis resulting in the inhibition of renal Na+-K+-ATPase. However reports on the involvement of this peptide in mammal blood volume and blood pressure homeostasis are conflicting; according to a report, in vivo it is not sufficient to activate cGMP and does not inhibit collecting duct transport nor effect diuresis and natriuresis. Appears to bind to specific receptors that are distinct from the receptors bound by atrial natriuretic peptide and vessel dilator. Possibly enhances protein excretion in urine by decreasing proximal tubular protein reabsorption. Functionally, may have a role in cardio-renal homeostasis through regulation of natriuresis, diuresis, and vasodilation. In vitro, promotes the production of cGMP and induces vasodilation. May promote natriuresis, at least in part, by enhancing prostaglandin E2 synthesis resulting in the inhibition of renal Na+-K+-ATPase. However reports on the involvement of this peptide in mammal blood volume and blood pressure homeostasis are conflicting; according to a report it is not sufficient to activate cGMP and does not inhibit collecting duct transport nor effect diuresis and natriuresis. Appears to bind to specific receptors that are distinct from the receptors bound by the atrial natriuretic and long-acting natriuretic peptides. Possibly functions in protein excretion in urine by maintaining the integrity of the proximal tubules and enhancing protein excretion by decreasing proximal tubular protein reabsorption. May have a role in cardio-renal homeostasis through regulation of diuresis and inhibiting aldosterone synthesis. In vitro, promotes the production of cGMP and induces vasodilation. May promote natriuresis, at least in part, by enhancing prostaglandin E2 synthesis resulting in the inhibition of renal Na+-K+-ATPase. May have a role in potassium excretion but not sodium excretion (natriuresis). Possibly enhances protein excretion in urine by decreasing proximal tubular protein reabsorption. Its function is as follows. Hormone produced in the kidneys that appears to be important for maintaining cardio-renal homeostasis. Mediates vasodilation, natriuresis and diuresis primarily in the renal system, in order to maintain the extracellular fluid volume and control the fluid-electrolyte balance. Specifically binds and stimulates cGMP production by renal transmembrane receptors, likely NPR1. Urodilatin not ANP, may be the natriuretic peptide responsible for the regulation of sodium and water homeostasis in the kidney. In terms of biological role, may have a role in cardio-renal homeostasis through regulation of natriuresis and vasodilation. In vivo promotes natriuresis and in vitro, vasodilates renal artery strips. Functionally, may have a role in cardio-renal homeostasis through regulation of regulation of natriuresis and vasodilation. In vivo promotes natriuresis. In vitro, vasodilates intestinal smooth muscle but not smooth muscle strips. May have a role in cardio-renal homeostasis through regulation of natriuresis and vasodilation. In vivo promotes natriuresis. In vitro, selectively vasodilates intestinal and vascular smooth muscle strips. Its function is as follows. May have a role in cardio-renal homeostasis through regulation of natriuresis and vasodilation. In vivo promotes natriuresis. In vitro, selectively vasodilates intestinal smooth muscle but not vascular smooth muscle strips. This is Natriuretic peptides A (NPPA) from Homo sapiens (Human).